The sequence spans 493 residues: 3-octaprenyl-4-hydroxybenzoate carboxy-lyase (493 aa).

Position 172 (Asn-172) interacts with Mn(2+). Prenylated FMN-binding positions include 175 to 177 (IYR), 189 to 191 (RWL), and 194 to 195 (RG). A Mn(2+)-binding site is contributed by Glu-238. Residue Asp-287 is the Proton donor of the active site.

The protein belongs to the UbiD family. As to quaternary structure, homohexamer. Requires prenylated FMN as cofactor. The cofactor is Mn(2+).

The protein resides in the cell membrane. The enzyme catalyses a 4-hydroxy-3-(all-trans-polyprenyl)benzoate + H(+) = a 2-(all-trans-polyprenyl)phenol + CO2. It participates in cofactor biosynthesis; ubiquinone biosynthesis. Its function is as follows. Catalyzes the decarboxylation of 3-octaprenyl-4-hydroxy benzoate to 2-octaprenylphenol, an intermediate step in ubiquinone biosynthesis. The protein is 3-octaprenyl-4-hydroxybenzoate carboxy-lyase of Cellvibrio japonicus (strain Ueda107) (Pseudomonas fluorescens subsp. cellulosa).